The following is a 73-amino-acid chain: UPF0235 protein HY04AAS1_1378 (73 aa).

Belongs to the UPF0235 family.

The sequence is that of UPF0235 protein HY04AAS1_1378 from Hydrogenobaculum sp. (strain Y04AAS1).